Here is a 313-residue protein sequence, read N- to C-terminus: Ribosomal RNA small subunit methyltransferase H (313 aa).

Residues 37–39 (GGH), Asp-57, Phe-82, Asp-104, and Gln-111 each bind S-adenosyl-L-methionine.

The protein belongs to the methyltransferase superfamily. RsmH family.

The protein resides in the cytoplasm. It catalyses the reaction cytidine(1402) in 16S rRNA + S-adenosyl-L-methionine = N(4)-methylcytidine(1402) in 16S rRNA + S-adenosyl-L-homocysteine + H(+). Specifically methylates the N4 position of cytidine in position 1402 (C1402) of 16S rRNA. This Alteromonas mediterranea (strain DSM 17117 / CIP 110805 / LMG 28347 / Deep ecotype) protein is Ribosomal RNA small subunit methyltransferase H.